Here is a 218-residue protein sequence, read N- to C-terminus: Glutathione S-transferase Mu 1 (218 aa).

The GST N-terminal domain occupies 2–88 (PMTLGYWDIR…YIARKHNLCG (87 aa)). Residue 7-8 (YW) coordinates glutathione. At Thr-34 the chain carries Phosphothreonine. Residues 43 to 46 (RSQW), Lys-50, 59 to 60 (NL), and 72 to 73 (QS) contribute to the glutathione site. The GST C-terminal domain occupies 90 to 208 (TEEEKIRVDI…KSSRFLPKPL (119 aa)). A substrate-binding site is contributed by Tyr-116.

The protein belongs to the GST superfamily. Mu family. Homodimer.

The protein localises to the cytoplasm. The catalysed reaction is RX + glutathione = an S-substituted glutathione + a halide anion + H(+). The enzyme catalyses prostaglandin A2 + glutathione = prostaglandin A2-S-(R)-glutathione. It carries out the reaction prostaglandin J2 + glutathione = prostaglandin J2-S-(R)-glutathione. It catalyses the reaction prostaglandin J2 + glutathione = prostaglandin J2-S-(S)-glutathione. The catalysed reaction is prostaglandin A2 + glutathione = prostaglandin A2-S-(S)-glutathione. The enzyme catalyses 11(S)-hydroxy-14(S),15(S)-epoxy-(5Z,8Z,12E)-eicosatrienoate + glutathione = (11S,15S)-dihydroxy-14(R)-S-glutathionyl-(5Z,8Z,12E)-eicosatrienoate. Its function is as follows. Conjugation of reduced glutathione to a wide number of exogenous and endogenous hydrophobic electrophiles. Involved in the formation of glutathione conjugates of both prostaglandin A2 (PGA2) and prostaglandin J2 (PGJ2). Participates in the formation of novel hepoxilin regioisomers. This is Glutathione S-transferase Mu 1 (GSTM1) from Macaca fascicularis (Crab-eating macaque).